A 414-amino-acid chain; its full sequence is Serine/threonine transporter SstT (414 aa).

At 2-15 (TTQHSPGLFRRLAH) the chain is on the cytoplasmic side. Residues 16-36 (GSLVKQILAGLILGILLAWIS) traverse the membrane as a helical segment. The Periplasmic portion of the chain corresponds to 37–45 (KPAAEAVGL). The chain crosses the membrane as a helical span at residues 46-66 (LGTLFVGALKAVAPILVLMLV). Topologically, residues 67 to 83 (MASIANHQHGQKTNIRP) are cytoplasmic. The chain crosses the membrane as a helical span at residues 84-104 (ILFLYLLGTFSAALAAVIFSF). The Periplasmic portion of the chain corresponds to 105-142 (AFPSTLHLSSSAGDISPPSGIVEVMRGLVMSMVSNPID). Residues 143-163 (ALLKGNYIGILVWAIGLGFAL) form a helical membrane-spanning segment. At 164–179 (RHGNETTKNLVNDMSN) the chain is on the cytoplasmic side. Residues 180–200 (AVTFMVKLVIHFAPIGIFGLV) form a helical membrane-spanning segment. The Periplasmic portion of the chain corresponds to 201–217 (SSTLATTGFSTLWGYAQ). A helical transmembrane segment spans residues 218–238 (LLVVLVGCMLLVALVVNPLLV). Over 239 to 299 (WWKIRRNPFP…VSIPLGATIN (61 aa)) the chain is Cytoplasmic. Residues 300–320 (MAGAAITITVLTLAAVNTLGI) form a helical membrane-spanning segment. The Periplasmic portion of the chain corresponds to 321-331 (PVDLPTALLLS). Residues 332–352 (VVASLCACGASGVAGGSLLLI) form a helical membrane-spanning segment. Topologically, residues 353-414 (PLACNMFGIS…DRLANSALRN (62 aa)) are cytoplasmic.

Belongs to the dicarboxylate/amino acid:cation symporter (DAACS) (TC 2.A.23) family.

Its subcellular location is the cell inner membrane. It carries out the reaction L-serine(in) + Na(+)(in) = L-serine(out) + Na(+)(out). It catalyses the reaction L-threonine(in) + Na(+)(in) = L-threonine(out) + Na(+)(out). Functionally, involved in the import of serine and threonine into the cell, with the concomitant import of sodium (symport system). This is Serine/threonine transporter SstT from Escherichia coli (strain UTI89 / UPEC).